The following is a 466-amino-acid chain: Uronate isomerase (466 aa).

The protein belongs to the metallo-dependent hydrolases superfamily. Uronate isomerase family.

The catalysed reaction is D-glucuronate = D-fructuronate. It carries out the reaction aldehydo-D-galacturonate = keto-D-tagaturonate. The protein operates within carbohydrate metabolism; pentose and glucuronate interconversion. The polypeptide is Uronate isomerase (Brucella canis (strain ATCC 23365 / NCTC 10854 / RM-666)).